Here is a 545-residue protein sequence, read N- to C-terminus: CTP synthase (545 aa).

Residues M1–L265 form an amidoligase domain region. S13 lines the CTP pocket. S13 is a binding site for UTP. ATP is bound by residues S14–I19 and D71. Residues D71 and E139 each contribute to the Mg(2+) site. Residues D146–E148, K186–Q191, and K222 each bind CTP. UTP-binding positions include K186–Q191 and K222. In terms of domain architecture, Glutamine amidotransferase type-1 spans K290 to E541. G351 lines the L-glutamine pocket. C378 (nucleophile; for glutamine hydrolysis) is an active-site residue. L-glutamine is bound by residues L379–Q382, E402, and R469. Residues H514 and E516 contribute to the active site.

Belongs to the CTP synthase family. As to quaternary structure, homotetramer.

The catalysed reaction is UTP + L-glutamine + ATP + H2O = CTP + L-glutamate + ADP + phosphate + 2 H(+). The enzyme catalyses L-glutamine + H2O = L-glutamate + NH4(+). It catalyses the reaction UTP + NH4(+) + ATP = CTP + ADP + phosphate + 2 H(+). The protein operates within pyrimidine metabolism; CTP biosynthesis via de novo pathway; CTP from UDP: step 2/2. Its activity is regulated as follows. Allosterically activated by GTP, when glutamine is the substrate; GTP has no effect on the reaction when ammonia is the substrate. The allosteric effector GTP functions by stabilizing the protein conformation that binds the tetrahedral intermediate(s) formed during glutamine hydrolysis. Inhibited by the product CTP, via allosteric rather than competitive inhibition. Catalyzes the ATP-dependent amination of UTP to CTP with either L-glutamine or ammonia as the source of nitrogen. Regulates intracellular CTP levels through interactions with the four ribonucleotide triphosphates. This is CTP synthase from Legionella pneumophila (strain Lens).